The primary structure comprises 628 residues: (+)-alpha pinene synthase 1, chloroplastic (628 aa).

The transit peptide at methionine 1–threonine 18 directs the protein to the chloroplast. Mg(2+) is bound by residues aspartate 379, aspartate 383, and aspartate 531. The DDXXD motif signature appears at aspartate 379–aspartate 383.

It belongs to the terpene synthase family. Tpsd subfamily. Mg(2+) serves as cofactor. Requires Mn(2+) as cofactor.

It localises to the plastid. The protein resides in the chloroplast. It catalyses the reaction (2E)-geranyl diphosphate = (1R,5R)-alpha-pinene + diphosphate. The protein operates within terpene metabolism; oleoresin biosynthesis. Its pathway is secondary metabolite biosynthesis; terpenoid biosynthesis. In terms of biological role, monoterpene synthase (TPS) involved in the biosynthesis of monoterpene natural products included in conifer oleoresin secretions and volatile emissions; these compounds contribute to biotic and abiotic stress defense against herbivores and pathogens. Catalyzes the conversion of (2E)-geranyl diphosphate (GPP) to (+)-alpha-pinene. This chain is (+)-alpha pinene synthase 1, chloroplastic, found in Pinus banksiana (Jack pine).